A 514-amino-acid chain; its full sequence is Putative GTP-binding protein 6 (514 aa).

The tract at residues 48–71 (WAGGGPVRGGGEEDPREDEEEEED) is disordered. Acidic residues predominate over residues 59–71 (EEDPREDEEEEED). The 165-residue stretch at 285–449 (PVVSVVGYTN…ALEASVLRAT (165 aa)) folds into the Hflx-type G domain. The Mg(2+) site is built by Thr298 and Thr319.

It belongs to the TRAFAC class OBG-HflX-like GTPase superfamily. HflX GTPase family. It depends on Mg(2+) as a cofactor.

The polypeptide is Putative GTP-binding protein 6 (Gtpbp6) (Mus musculus (Mouse)).